The following is a 766-amino-acid chain: LPS-assembly protein LptD (766 aa).

An N-terminal signal peptide occupies residues Met1–Ala18.

It belongs to the LptD family. In terms of assembly, component of the lipopolysaccharide transport and assembly complex. Interacts with LptE and LptA.

It is found in the cell outer membrane. Its function is as follows. Together with LptE, is involved in the assembly of lipopolysaccharide (LPS) at the surface of the outer membrane. The polypeptide is LPS-assembly protein LptD (Shewanella frigidimarina (strain NCIMB 400)).